A 1383-amino-acid chain; its full sequence is ATP-dependent RNA helicase TDRD9 (1383 aa).

The interval 35–82 is disordered; that stretch reads EAPREEVQRSEEVPNEDPTAQAQVPVKATAPARPASTSGRSLSQRSSE. Residues 36–46 show a composition bias toward basic and acidic residues; that stretch reads APREEVQRSEE. Residues 70-80 are compositionally biased toward low complexity; sequence STSGRSLSQRS. Residues 144-310 enclose the Helicase ATP-binding domain; sequence ISLIESNSVV…FAVPVQNKMN (167 aa). 157-164 lines the ATP pocket; sequence GATGSGKS. The DEAH box motif lies at 256-259; that stretch reads DEVH. The Helicase C-terminal domain occupies 378 to 545; it reads SGAQFVSERS…ILKVKLLDMG (168 aa). Residues 945–1005 form the Tudor domain; the sequence is HPHPDLVCLA…REIPCQFLEL (61 aa).

It belongs to the DEAD box helicase family. DEAH subfamily. As to quaternary structure, interacts with piRNA-associated proteins PIWIL1 and PIWIL4. Predominantly expressed in reproductive organs. Detected in mitotic spermatogonia, meiotic spermatocytes (predominantly at the pachytene stage), haploid spermatids in the testis, and in growing oocytes in the ovary (at protein level).

The protein localises to the cytoplasm. It localises to the nucleus. It catalyses the reaction ATP + H2O = ADP + phosphate + H(+). Its function is as follows. ATP-binding RNA helicase which plays a central role during spermatogenesis by repressing transposable elements and preventing their mobilization, which is essential for the germline integrity. Acts via the piRNA metabolic process, which mediates the repression of transposable elements during meiosis by forming complexes composed of piRNAs and Piwi proteins and governs the methylation and subsequent repression of transposons. Acts downstream of piRNA biogenesis: exclusively required for transposon silencing in the nucleus, suggesting that it acts as a nuclear effector in the nucleus together with PIWIL4. The chain is ATP-dependent RNA helicase TDRD9 from Mus musculus (Mouse).